The chain runs to 260 residues: Ribose-5-phosphate isomerase A (260 aa).

Substrate is bound by residues 33–36, 89–92, and 102–105; these read TGST, DGAD, and KGGG. Glu-111 functions as the Proton acceptor in the catalytic mechanism. Position 129 (Lys-129) interacts with substrate.

This sequence belongs to the ribose 5-phosphate isomerase family. Homodimer.

The catalysed reaction is aldehydo-D-ribose 5-phosphate = D-ribulose 5-phosphate. It functions in the pathway carbohydrate degradation; pentose phosphate pathway; D-ribose 5-phosphate from D-ribulose 5-phosphate (non-oxidative stage): step 1/1. In terms of biological role, catalyzes the reversible conversion of ribose-5-phosphate to ribulose 5-phosphate. The polypeptide is Ribose-5-phosphate isomerase A (Dinoroseobacter shibae (strain DSM 16493 / NCIMB 14021 / DFL 12)).